We begin with the raw amino-acid sequence, 265 residues long: Energy-coupling factor transporter transmembrane protein EcfT (265 aa).

5 consecutive transmembrane segments (helical) span residues M32–I52, L72–I92, L115–T135, V150–M170, and L245–W265.

The protein belongs to the energy-coupling factor EcfT family. In terms of assembly, forms a stable energy-coupling factor (ECF) transporter complex composed of 2 membrane-embedded substrate-binding proteins (S component), 2 ATP-binding proteins (A component) and 2 transmembrane proteins (T component). May be able to interact with more than 1 S component at a time.

The protein localises to the cell membrane. Its function is as follows. Transmembrane (T) component of an energy-coupling factor (ECF) ABC-transporter complex. Unlike classic ABC transporters this ECF transporter provides the energy necessary to transport a number of different substrates. This Thermosediminibacter oceani (strain ATCC BAA-1034 / DSM 16646 / JW/IW-1228P) protein is Energy-coupling factor transporter transmembrane protein EcfT.